Reading from the N-terminus, the 810-residue chain is DNA ligase (810 aa).

Residues 46–50, 95–96, and glutamate 129 contribute to the NAD(+) site; these read DAEYD and SL. The active-site N6-AMP-lysine intermediate is lysine 131. Residues arginine 152, glutamate 189, lysine 305, and lysine 329 each contribute to the NAD(+) site. Residues cysteine 434, cysteine 437, cysteine 458, and cysteine 464 each contribute to the Zn(2+) site. The interval 528–548 is disordered; the sequence is ERRAESGTAEPPKKAAKKKGD. In terms of domain architecture, BRCT spans 731–810; it reads AAASTFAGKT…DDWLAMVAQG (80 aa).

Belongs to the NAD-dependent DNA ligase family. LigA subfamily. It depends on Mg(2+) as a cofactor. Mn(2+) is required as a cofactor.

The catalysed reaction is NAD(+) + (deoxyribonucleotide)n-3'-hydroxyl + 5'-phospho-(deoxyribonucleotide)m = (deoxyribonucleotide)n+m + AMP + beta-nicotinamide D-nucleotide.. In terms of biological role, DNA ligase that catalyzes the formation of phosphodiester linkages between 5'-phosphoryl and 3'-hydroxyl groups in double-stranded DNA using NAD as a coenzyme and as the energy source for the reaction. It is essential for DNA replication and repair of damaged DNA. The polypeptide is DNA ligase (Methylobacterium radiotolerans (strain ATCC 27329 / DSM 1819 / JCM 2831 / NBRC 15690 / NCIMB 10815 / 0-1)).